Consider the following 444-residue polypeptide: Tubulin beta chain (444 aa).

Residues 1 to 4 carry the MREI motif motif; the sequence is MREI. 8 residues coordinate GTP: Q11, E69, S138, G142, T143, G144, N204, and N226. E69 provides a ligand contact to Mg(2+). The interval 421–444 is disordered; that stretch reads EYQQYQDATAEEEEDFNEEAEEEA. Residues 429–444 show a composition bias toward acidic residues; it reads TAEEEEDFNEEAEEEA. The residue at position 438 (E438) is a 5-glutamyl polyglutamate.

Belongs to the tubulin family. Dimer of alpha and beta chains. A typical microtubule is a hollow water-filled tube with an outer diameter of 25 nm and an inner diameter of 15 nM. Alpha-beta heterodimers associate head-to-tail to form protofilaments running lengthwise along the microtubule wall with the beta-tubulin subunit facing the microtubule plus end conferring a structural polarity. Microtubules usually have 13 protofilaments but different protofilament numbers can be found in some organisms and specialized cells. Requires Mg(2+) as cofactor. Post-translationally, some glutamate residues at the C-terminus are polyglycylated, resulting in polyglycine chains on the gamma-carboxyl group. Glycylation is mainly limited to tubulin incorporated into axonemes (cilia and flagella) whereas glutamylation is prevalent in neuronal cells, centrioles, axonemes, and the mitotic spindle. Both modifications can coexist on the same protein on adjacent residues, and lowering polyglycylation levels increases polyglutamylation, and reciprocally. The precise function of polyglycylation is still unclear. In terms of processing, some glutamate residues at the C-terminus are polyglutamylated, resulting in polyglutamate chains on the gamma-carboxyl group. Polyglutamylation plays a key role in microtubule severing by spastin (SPAST). SPAST preferentially recognizes and acts on microtubules decorated with short polyglutamate tails: severing activity by SPAST increases as the number of glutamates per tubulin rises from one to eight, but decreases beyond this glutamylation threshold.

The protein resides in the cytoplasm. The protein localises to the cytoskeleton. In terms of biological role, tubulin is the major constituent of microtubules, a cylinder consisting of laterally associated linear protofilaments composed of alpha- and beta-tubulin heterodimers. Microtubules grow by the addition of GTP-tubulin dimers to the microtubule end, where a stabilizing cap forms. Below the cap, tubulin dimers are in GDP-bound state, owing to GTPase activity of alpha-tubulin. This chain is Tubulin beta chain (tubb), found in Xenopus laevis (African clawed frog).